The primary structure comprises 178 residues: Large ribosomal subunit protein uL30 (178 aa).

The protein belongs to the universal ribosomal protein uL30 family. As to quaternary structure, part of the 50S ribosomal subunit.

The polypeptide is Large ribosomal subunit protein uL30 (Pyrobaculum aerophilum (strain ATCC 51768 / DSM 7523 / JCM 9630 / CIP 104966 / NBRC 100827 / IM2)).